Reading from the N-terminus, the 307-residue chain is tRNA dimethylallyltransferase (307 aa).

9–16 contacts ATP; it reads GPTAIGKT. Position 11 to 16 (11 to 16) interacts with substrate; it reads TAIGKT. Interaction with substrate tRNA stretches follow at residues 34–37 and 164–168; these read DSRQ and QRMMR.

This sequence belongs to the IPP transferase family. In terms of assembly, monomer. The cofactor is Mg(2+).

It catalyses the reaction adenosine(37) in tRNA + dimethylallyl diphosphate = N(6)-dimethylallyladenosine(37) in tRNA + diphosphate. Functionally, catalyzes the transfer of a dimethylallyl group onto the adenine at position 37 in tRNAs that read codons beginning with uridine, leading to the formation of N6-(dimethylallyl)adenosine (i(6)A). This chain is tRNA dimethylallyltransferase, found in Flavobacterium psychrophilum (strain ATCC 49511 / DSM 21280 / CIP 103535 / JIP02/86).